The primary structure comprises 624 residues: Kelch-like ECH-associated protein 1 (624 aa).

The tract at residues 1-27 (MQPEPRPSGAGAHTQFLPLRSQRPEGA) is disordered. Cys-38 carries the post-translational modification S-(2-succinyl)cysteine. The BTB domain maps to 77–149 (CDVTLQVKYE…AYTASISMGE (73 aa)). Arg-135 participates in a covalent cross-link: N5-[4-(S-L-cysteinyl)-5-methyl-1H-imidazol-2-yl]-L-ornithine (Arg-Cys) (interchain with C-151 in KEAP1). S-(2-succinyl)cysteine occurs at positions 151 and 241. Cys-151 bears the S-(2,3-dicarboxypropyl)cysteine; alternate mark. Position 151 is an S-nitrosocysteine; alternate (Cys-151). Cys-151 participates in a covalent cross-link: N5-[4-(S-L-cysteinyl)-5-methyl-1H-imidazol-2-yl]-L-ornithine (Cys-Arg) (interchain with R-135 in KEAP1). The region spanning 184–286 (AIGIANFAEQ…TPHFLQMQLQ (103 aa)) is the BACK domain. An S-(2,3-dicarboxypropyl)cysteine mark is found at Cys-257 and Cys-273. 2 positions are modified to S-(2-succinyl)cysteine: Cys-288 and Cys-319. Position 288 is an S-(2,3-dicarboxypropyl)cysteine; alternate (Cys-288). 6 Kelch repeats span residues 327 to 372 (LIYT…VVGG), 373 to 423 (LLYA…VIDG), 424 to 470 (HIYA…VLNR), 471 to 517 (LLYA…VLHN), 519 to 564 (IYAA…VHQG), and 565 to 611 (RIYV…VTME). Cys-434 carries the S-cGMP-cysteine modification. Position 613 is an S-(2-succinyl)cysteine (Cys-613).

The protein belongs to the KEAP1 family. As to quaternary structure, component of the BCR(KEAP1) E3 ubiquitin ligase complex, at least composed of 2 molecules of CUL3, 2 molecules of KEAP1, and RBX1. Interacts with NFE2L2/NRF2; the interaction is direct. Forms a ternary complex with NFE2L2/NRF2 and PGAM5. Interacts with (phosphorylated) SQSTM1/p62; the interaction is direct and inactivates the BCR(KEAP1) complex by sequestering it in inclusion bodies, promoting its degradation. Interacts with NFE2L1. Interacts with BPTF and PTMA. Interacts with MAP1LC3B. Interacts indirectly with ENC1. Interacts with SESN1 and SESN2. Interacts with HSP90AA1 and HSP90AB1. Interacts with PGCKA1; this interaction prevents the ubiquitination of KEAP1 by TRIM25, thus protecting KEAP1 protein from degradation. Non-enzymatic covalent modifications of reactive cysteines by electrophile metabolites inactivate the BCR(KEAP1) complex. Accumulation of fumarate promotes the formation of cysteine S-succination (S-(2-succinyl)cysteine), leading to inactivate the BCR(KEAP1) complex and promote NFE2L2/NRF2 nuclear accumulation and activation. Nitric oxide-dependent 8-Nitro-cGMP formation promotes cysteine guanylation (S-cGMP-cysteine), leading to NFE2L2/NRF2 nuclear accumulation and activation. Itaconate, an anti-inflammatory metabolite generated in response to lipopolysaccharide, alkylates cysteines, activating NFE2L2/NRF2. Methylglyoxal, a reactive metabolite that accumulates when the glycolytic enzyme PGK1 is inhibited, promotes formation of a methylimidazole cross-link between proximal Cys-151 and Arg-135 on another KEAP1 molecule, resulting in an inactive dimer that inactivates the BCR(KEAP1) complex. Post-translationally, degraded via a proteasomal-independent process during selective autophagy: interaction with phosphorylated SQSTM1/p62 sequesters KEAP1 in inclusion bodies, leading to its degradation. In terms of processing, auto-ubiquitinated by the BCR(KEAP1) complex. Quinone-induced oxidative stress, but not sulforaphane, increases its ubiquitination. Ubiquitination and subsequent degradation is most pronounced following prolonged exposure of cells to oxidative stress, particularly in glutathione-deficient cells that are highly susceptible to oxidative stress. Deubiquitinated by USP25; leading to stabilization. Ubiquitinated by TRIM25; leading to degradation upon ER stress.

The protein resides in the cytoplasm. It localises to the nucleus. It functions in the pathway protein modification; protein ubiquitination. With respect to regulation, ubiquitin ligase activity of the BCR(KEAP1) complex is inhibited by oxidative stress and electrophile metabolites such as sulforaphane. Electrophile metabolites react with reactive cysteine residues in KEAP1 and trigger non-enzymatic covalent modifications of these cysteine residues, leading to inactivate the ubiquitin ligase activity of the BCR(KEAP1) complex. Selective autophagy also inactivates the BCR(KEAP1) complex via interaction between KEAP1 and SQSTM1/p62, which sequesters the complex in inclusion bodies and promotes its degradation. In terms of biological role, substrate-specific adapter of a BCR (BTB-CUL3-RBX1) E3 ubiquitin ligase complex that regulates the response to oxidative stress by targeting NFE2L2/NRF2 for ubiquitination. KEAP1 acts as a key sensor of oxidative and electrophilic stress: in normal conditions, the BCR(KEAP1) complex mediates ubiquitination and degradation of NFE2L2/NRF2, a transcription factor regulating expression of many cytoprotective genes. In response to oxidative stress, different electrophile metabolites trigger non-enzymatic covalent modifications of highly reactive cysteine residues in KEAP1, leading to inactivate the ubiquitin ligase activity of the BCR(KEAP1) complex, promoting NFE2L2/NRF2 nuclear accumulation and expression of phase II detoxifying enzymes. In response to selective autophagy, KEAP1 is sequestered in inclusion bodies following its interaction with SQSTM1/p62, leading to inactivation of the BCR(KEAP1) complex and activation of NFE2L2/NRF2. The BCR(KEAP1) complex also mediates ubiquitination of SQSTM1/p62, increasing SQSTM1/p62 sequestering activity and degradation. The BCR(KEAP1) complex also targets BPTF and PGAM5 for ubiquitination and degradation by the proteasome. The chain is Kelch-like ECH-associated protein 1 from Sus scrofa (Pig).